The primary structure comprises 923 residues: Protein prickle (923 aa).

Positions 1-196 (MSYPYQKSHH…HPFHSPASAA (196 aa)) are disordered. Residues 11–34 (QTQQPQQNGHPQHQLMLQQQQQAD) are compositionally biased toward low complexity. A compositionally biased stretch (basic residues) spans 37-49 (PHHHHHHHVHHAT). Low complexity-rich tracts occupy residues 59–73 (RSPL…LYSG) and 106–118 (MPGM…PPGM). Positions 122-134 (LGGGGGGGGGGSA) are enriched in gly residues. Low complexity-rich tracts occupy residues 152–169 (STVT…SARS) and 184–196 (SSHH…ASAA). One can recognise a PET domain in the interval 275–383 (GGGHNYSQSD…TVKQITTTLI (109 aa)). 3 consecutive LIM zinc-binding domains span residues 382-446 (LICE…ETLK), 447-507 (PRCS…MFAE), and 508-570 (YCDY…GEPP). 2 disordered regions span residues 571–668 (TPSD…LDLT) and 703–867 (GPIA…SSAD). The span at 709–718 (NGNGPTGGGP) shows a compositional bias: gly residues. Positions 738-748 (ESPSFSGTNSP) are enriched in polar residues. A compositionally biased stretch (basic and acidic residues) spans 777–786 (HSIKEVRFEG). The span at 792 to 805 (LPRTKSYCQRNGGQ) shows a compositional bias: polar residues. A compositionally biased stretch (acidic residues) spans 817 to 827 (SDDDELAEDET). Positions 840 to 852 (QREQQRPVDDSDA) are enriched in basic and acidic residues. Residues 853 to 865 (RSVCSTCSSSSSS) are compositionally biased toward low complexity.

Belongs to the prickle / espinas / testin family. Interacts with dsh; PET and LIM domains interact with dsh DEP domain, in wing cells. Interacts with Vang in photoreceptor cells.

The protein resides in the cell membrane. Acts in a planar cell polarity (PCP) complex; polarization along the apical/basal axis of epithelial cells. PCP signaling in the wing disk requires the receptor fz and the cytoplasmic proteins dsh and pk. These act in a feedback loop leading to activation of the jnk cascade and subsequent polarized arrangement of hairs and bristles. Dgo and pk compete with one another for dsh binding, thereby modulating fz dsh activity and ensuring tight control over fz PCP signaling. Vang, stan and pk function together to regulate the establishment of tissue polarity in the adult eye. The chain is Protein prickle from Anopheles gambiae (African malaria mosquito).